The chain runs to 4226 residues: Guanylate cyclase alpha (4226 aa).

Residues 1–104 lie on the Cytoplasmic side of the membrane; sequence MSDSKKHYNE…SFIFKGLYEQ (104 aa). The chain crosses the membrane as a helical span at residues 105–125; the sequence is FLRLPNIWFLLISLLEFIPQY. Residues 126 to 131 lie on the Extracellular side of the membrane; that stretch reads QNLSNY. N-linked (GlcNAc...) asparagine glycosylation is present at asparagine 127. The chain crosses the membrane as a helical span at residues 132 to 152; the sequence is MYYSKHSSFFLLLFFICVSII. The Cytoplasmic portion of the chain corresponds to 153–337; the sequence is KNIYEDSRRS…LGYVNKELNS (185 aa). The helical transmembrane segment at 338–358 threads the bilayer; it reads YTIIGLIFTFICVFISVLFKW. Over 359-392 the chain is Extracellular; it reads TEDDKFRNGSHFFLITVKDNICESIVKYTLLYSN. A glycan (N-linked (GlcNAc...) asparagine) is linked at asparagine 366. The helical transmembrane segment at 393-413 threads the bilayer; sequence IIPISILISVDLISILQSILI. The Cytoplasmic segment spans residues 414-2083; that stretch reads ENDNHISTFE…FIYGSKHLYT (1670 aa). 4 disordered regions span residues 552-572, 832-904, 968-989, and 1740-1765; these read EHSQTLDNNNNNDNNNNNNIC, SSKN…SNND, INNNNNNNNDQKTNNLKYKSSS, and NINKNYKYDKNDKHNNNNNNNNNNSN. Residues 558-570 show a composition bias toward low complexity; it reads DNNNNNDNNNNNN. Residues 838–847 show a composition bias toward acidic residues; that stretch reads TLDDPTELIS. Basic and acidic residues predominate over residues 854-873; that stretch reads LRDKYEHTSDKKNDTNKNRD. Residues 874–904 show a composition bias toward low complexity; that stretch reads GANNSNNNNNKDVSNNKNKNNNNYNYNSNND. Basic and acidic residues predominate over residues 1745–1754; that stretch reads YKYDKNDKHN. The span at 1755-1765 shows a compositional bias: low complexity; it reads NNNNNNNNNSN. Residues 2084 to 2104 traverse the membrane as a helical segment; the sequence is ISIILYWNFFKNILLILPIFF. Residues 2105 to 2119 are Extracellular-facing; sequence YQAYASWSCVKIYPE. A helical transmembrane segment spans residues 2120–2140; sequence LLYTFFSIFWVFIPIIYYMFL. Residues 2141-2169 are Cytoplasmic-facing; the sequence is QHNLNYDILYNIPLFYALSRRRYNMNCFK. Residues 2170 to 2190 form a helical membrane-spanning segment; it reads FLPWIFEAIFYSMIIYFFAYA. The Extracellular portion of the chain corresponds to 2191-2202; that stretch reads ALKENSHLNNGE. Residues 2203–2223 form a helical membrane-spanning segment; that stretch reads VITINTFGNICFIGCLLISIL. At 2224 to 2235 the chain is on the cytoplasmic side; it reads RLFLEGSLWSPS. A helical membrane pass occupies residues 2236-2256; sequence ILITCFGCFLFVFFPSLLFIC. Residues 2257–2275 are Extracellular-facing; it reads FAYLSNEYIREVFRQTFLW. A helical transmembrane segment spans residues 2276–2296; that stretch reads APLYVLLILWFSTCIISYIFI. At 2297–2787 the chain is on the cytoplasmic side; the sequence is NFTKSILFPN…QIHKKNKFYK (491 aa). The segment at 2477 to 2505 is disordered; the sequence is NNDNNNDDNDNDNNNNNNNNDNYNNNDHN. The segment covering 2488-2502 has biased composition (low complexity); the sequence is DNNNNNNNNDNYNNN. The helical transmembrane segment at 2788–2808 threads the bilayer; sequence TFTPWYRFIFLLLGVFFLYVW. The Extracellular portion of the chain corresponds to 2809–2828; that stretch reads KLESSLSQLWNMPSDASTDV. Residues 2829 to 2849 traverse the membrane as a helical segment; sequence FILFLSLLLELVLLAATVTTF. The Cytoplasmic segment spans residues 2850 to 2860; the sequence is FSNIFIENFNK. A helical transmembrane segment spans residues 2861 to 2881; it reads IISAVVILIITYHVVSYSVTH. Residues 2882-2900 are Extracellular-facing; sequence IDGVFQAVLFPLYTFVILR. The chain crosses the membrane as a helical span at residues 2901–2921; that stretch reads LPFVNAVLCNIIFLGLFIIRF. Residues 2922–2930 lie on the Cytoplasmic side of the membrane; that stretch reads NGDHFLDKK. Residues 2931–2951 form a helical membrane-spanning segment; that stretch reads GLAHYIPLFIGVDVFVGFVGY. Residues 2952–3008 lie on the Extracellular side of the membrane; the sequence is RLEYNQRKNFLLEYSVESSRRKQREILNTMLPPFVVDEMIYSELNEEGIPISLKAED. A helical transmembrane segment spans residues 3009–3029; that stretch reads ISTVTIIFCDIYDFQNIVASI. The Guanylate cyclase 1 domain occupies 3013-3270; sequence TIIFCDIYDF…DTVNTASRMK (258 aa). Residues 3030–3738 are Cytoplasmic-facing; the sequence is EPTRLVEVLD…SNINSIEQAL (709 aa). Disordered regions lie at residues 3077 to 3150 and 3201 to 3230; these read EDEL…FEED and DANDDTHNVNDSFNNDKAENDNTNTDNNKP. Low complexity-rich tracts occupy residues 3083 to 3098 and 3108 to 3138; these read NKYSNNNKNNNNNYYY and NNNNNNNNNNNNNNNNNNNNLNNNNNNNNVN. Over residues 3140-3150 the composition is skewed to acidic residues; it reads SDDDGDFFEED. The segment covering 3201–3220 has biased composition (basic and acidic residues); it reads DANDDTHNVNDSFNNDKAEN. A helical membrane pass occupies residues 3739–3759; that stretch reads IIFLVTFVMQTLISSTVSIVF. At 3760–3773 the chain is on the extracellular side; that stretch reads IDHKRATQTLHINY. Residues 3774-3794 traverse the membrane as a helical segment; it reads FAYWSVRSVYTFFGFVLWLLF. At 3795–3811 the chain is on the cytoplasmic side; the sequence is HYRTRPEVSSLLNIKWM. Residues 3812 to 3832 form a helical membrane-spanning segment; the sequence is IFFLNLLFISAACVFSIAYLW. At 3833-3840 the chain is on the extracellular side; it reads AISETDQT. A helical transmembrane segment spans residues 3841–3861; the sequence is TSYTIWMTNDTIEFFFYLVIL. The Cytoplasmic segment spans residues 3862–3871; it reads HHNTGMLFQT. Residues 3872–3892 form a helical membrane-spanning segment; that stretch reads CILVDLLFITMSLTFIATSVV. Lysine 3893 is a topological domain (extracellular). The chain crosses the membrane as a helical span at residues 3894 to 3914; the sequence is TITTDSTVLLIPWYVAFNLIS. The Cytoplasmic portion of the chain corresponds to 3915-4226; the sequence is TYCKESIDRR…INVNDRQSNL (312 aa). In terms of domain architecture, Guanylate cyclase 2 spans 3970–4104; it reads TFLFADICGF…IDVLTGNLME (135 aa). 3 residues coordinate Mg(2+): aspartate 3975, isoleucine 3976, and aspartate 4019.

This sequence in the N-terminal section; belongs to the cation transport ATPase (P-type) (TC 3.A.3) family. Type IV subfamily. The protein in the C-terminal section; belongs to the adenylyl cyclase class-4/guanylyl cyclase family. Mg(2+) serves as cofactor. It depends on Mn(2+) as a cofactor.

Its subcellular location is the cell membrane. The protein localises to the cytoplasmic vesicle membrane. The enzyme catalyses GTP = 3',5'-cyclic GMP + diphosphate. Its function is as follows. Catalyzes the synthesis of the second messenger cGMP from GTP. In asexual blood stage schizonts, required for cGMP production which is essential for PKG activation, PKG-dependent Ca(2+) release, and ultimately merozoite egress from host erythrocytes. In Plasmodium falciparum (isolate 3D7), this protein is Guanylate cyclase alpha.